The primary structure comprises 160 residues: Transcriptional regulator MraZ (160 aa).

SpoVT-AbrB domains follow at residues 5-50 (KFET…EGVY) and 93-136 (AIEC…SQAE).

Belongs to the MraZ family. In terms of assembly, forms oligomers.

It is found in the cytoplasm. The protein resides in the nucleoid. The chain is Transcriptional regulator MraZ from Geotalea uraniireducens (strain Rf4) (Geobacter uraniireducens).